We begin with the raw amino-acid sequence, 443 residues long: UDP-N-acetylmuramate--L-alanine ligase (443 aa).

110 to 116 (GAHGKTS) serves as a coordination point for ATP.

It belongs to the MurCDEF family.

Its subcellular location is the cytoplasm. It catalyses the reaction UDP-N-acetyl-alpha-D-muramate + L-alanine + ATP = UDP-N-acetyl-alpha-D-muramoyl-L-alanine + ADP + phosphate + H(+). Its pathway is cell wall biogenesis; peptidoglycan biosynthesis. In terms of biological role, cell wall formation. This is UDP-N-acetylmuramate--L-alanine ligase from Streptococcus suis (strain 98HAH33).